The following is a 306-amino-acid chain: UDP-3-O-acyl-N-acetylglucosamine deacetylase (306 aa).

Zn(2+)-binding residues include histidine 78, histidine 237, and aspartate 241. Catalysis depends on histidine 264, which acts as the Proton donor.

It belongs to the LpxC family. It depends on Zn(2+) as a cofactor.

The enzyme catalyses a UDP-3-O-[(3R)-3-hydroxyacyl]-N-acetyl-alpha-D-glucosamine + H2O = a UDP-3-O-[(3R)-3-hydroxyacyl]-alpha-D-glucosamine + acetate. The protein operates within glycolipid biosynthesis; lipid IV(A) biosynthesis; lipid IV(A) from (3R)-3-hydroxytetradecanoyl-[acyl-carrier-protein] and UDP-N-acetyl-alpha-D-glucosamine: step 2/6. Functionally, catalyzes the hydrolysis of UDP-3-O-myristoyl-N-acetylglucosamine to form UDP-3-O-myristoylglucosamine and acetate, the committed step in lipid A biosynthesis. In Aromatoleum aromaticum (strain DSM 19018 / LMG 30748 / EbN1) (Azoarcus sp. (strain EbN1)), this protein is UDP-3-O-acyl-N-acetylglucosamine deacetylase.